A 57-amino-acid polypeptide reads, in one-letter code: uncharacterized protein (57 aa).

A helical transmembrane segment spans residues 10–27; sequence FGLLWLIIGSEAFHLNAL. A coiled-coil region spans residues 28 to 55; the sequence is KQDHLERMKQYDAKIRLAKHEFDDTSNE.

It is found in the membrane. This is an uncharacterized protein from Schizosaccharomyces pombe (strain 972 / ATCC 24843) (Fission yeast).